Reading from the N-terminus, the 149-residue chain is Ribosome maturation factor RimP (149 aa).

The protein belongs to the RimP family.

It is found in the cytoplasm. Its function is as follows. Required for maturation of 30S ribosomal subunits. This Sulfurimonas denitrificans (strain ATCC 33889 / DSM 1251) (Thiomicrospira denitrificans (strain ATCC 33889 / DSM 1251)) protein is Ribosome maturation factor RimP.